A 1377-amino-acid chain; its full sequence is DNA-directed RNA polymerase subunit beta' (1377 aa).

Residues Cys60, Cys62, Cys75, and Cys78 each contribute to the Zn(2+) site. Asp449, Asp451, and Asp453 together coordinate Mg(2+). The Zn(2+) site is built by Cys777, Cys851, Cys858, and Cys861.

The protein belongs to the RNA polymerase beta' chain family. As to quaternary structure, the RNAP catalytic core consists of 2 alpha, 1 beta, 1 beta' and 1 omega subunit. When a sigma factor is associated with the core the holoenzyme is formed, which can initiate transcription. Mg(2+) is required as a cofactor. It depends on Zn(2+) as a cofactor.

It carries out the reaction RNA(n) + a ribonucleoside 5'-triphosphate = RNA(n+1) + diphosphate. Functionally, DNA-dependent RNA polymerase catalyzes the transcription of DNA into RNA using the four ribonucleoside triphosphates as substrates. This Borrelia turicatae (strain 91E135) protein is DNA-directed RNA polymerase subunit beta'.